The following is a 300-amino-acid chain: MKIAILSRDGTLYSCKRLREAAMRRGHLVEILDPLSCYMNINPAASSIHYKGRRLPHYDAVIPRIGSAITFYGTAALRQFELLGSYPLNESVAITRARDKLRSLQLLARQGIDLPITGIAHSPDDTSDLIKMVGGAPLVVKLVEGTQGIGVVLAETRQAAESVIDAFRGLNAHILVQEYIAEAKGCDIRCLVVGNEVVAAIERCAKAGDFRSNLHRGGVASIATITPRERDIAIKAAQTLGLDVAGVDILRAARGPLVMEVNASPGLEGIEKTTGVDIAGRMIQWIERHATPEFCLKIGG.

Residues L104–E287 enclose the ATP-grasp domain. ATP is bound by residues K141, E178–Y179, D187, and R211–N213. Residues D248, E260, and N262 each coordinate Mg(2+). Mn(2+) is bound by residues D248, E260, and N262.

The protein belongs to the RimK family. Requires Mg(2+) as cofactor. It depends on Mn(2+) as a cofactor.

An L-glutamate ligase that catalyzes the ATP-dependent post-translational addition of glutamate residues to the C-terminus of ribosomal protein bS6 (RpsF). Is also able to catalyze the synthesis of poly-alpha-glutamate in vitro, via ATP hydrolysis from unprotected glutamate as substrate. The number of glutamate residues added to either RpsF or to poly-alpha-glutamate changes with pH. The sequence is that of Ribosomal protein bS6--L-glutamate ligase from Salmonella schwarzengrund (strain CVM19633).